We begin with the raw amino-acid sequence, 488 residues long: Germacrene A hydroxylase (488 aa).

The helical; Signal-anchor for type II membrane protein transmembrane segment at 7–23 threads the bilayer; sequence TSIALATILFFVYKFAT. 4 N-linked (GlcNAc...) asparagine glycosylation sites follow: Asn-169, Asn-260, Asn-379, and Asn-410. Cys-432 is a binding site for heme.

The protein belongs to the cytochrome P450 family. Expressed in floral glandular trichomes.

The protein localises to the endoplasmic reticulum membrane. It catalyses the reaction (+)-(R)-germacrene A + 3 reduced [NADPH--hemoprotein reductase] + 3 O2 = germacra-1(10),4,11(13)-trien-12-oate + 3 oxidized [NADPH--hemoprotein reductase] + 4 H2O + 4 H(+). It functions in the pathway secondary metabolite biosynthesis; terpenoid biosynthesis. Functionally, involved in the biosynthesis of germacrene-derived sesquiterpene lactones. Component of the parthenolide biosynthetic pathway; parthenolide and conjugates are promising anti-cancer drugs highly active against colon cancer cells. Catalyzes three consecutive oxidations of germacrene A to produce germacrene A acid. The polypeptide is Germacrene A hydroxylase (Tanacetum parthenium (Feverfew)).